Reading from the N-terminus, the 313-residue chain is uncharacterized protein (313 aa).

The N-acetyltransferase domain occupies 6-152; sequence YDILENPEPN…YHASMEKMTG (147 aa).

Functionally, to the C-terminal of C.elegans F21C10.9. This is an uncharacterized protein from Caenorhabditis elegans.